A 299-amino-acid chain; its full sequence is N-acetylneuraminate lyase (299 aa).

Ser-45 and Ser-46 together coordinate aceneuramate. Tyr-134 (proton donor) is an active-site residue. Lys-161 functions as the Schiff-base intermediate with substrate in the catalytic mechanism. Positions 163, 185, 187, and 188 each coordinate aceneuramate.

It belongs to the DapA family. NanA subfamily. In terms of assembly, homotetramer.

It is found in the cytoplasm. The enzyme catalyses aceneuramate = aldehydo-N-acetyl-D-mannosamine + pyruvate. Its pathway is amino-sugar metabolism; N-acetylneuraminate degradation; D-fructose 6-phosphate from N-acetylneuraminate: step 1/5. Functionally, catalyzes the reversible aldol cleavage of N-acetylneuraminic acid (sialic acid; Neu5Ac) to form pyruvate and N-acetylmannosamine (ManNAc) via a Schiff base intermediate. This is N-acetylneuraminate lyase from Rhizobium meliloti (strain 1021) (Ensifer meliloti).